A 192-amino-acid chain; its full sequence is Large ribosomal subunit protein bL25 (192 aa).

It belongs to the bacterial ribosomal protein bL25 family. CTC subfamily. As to quaternary structure, part of the 50S ribosomal subunit; part of the 5S rRNA/L5/L18/L25 subcomplex. Contacts the 5S rRNA. Binds to the 5S rRNA independently of L5 and L18.

In terms of biological role, this is one of the proteins that binds to the 5S RNA in the ribosome where it forms part of the central protuberance. The sequence is that of Large ribosomal subunit protein bL25 from Porphyromonas gingivalis (strain ATCC 33277 / DSM 20709 / CIP 103683 / JCM 12257 / NCTC 11834 / 2561).